A 424-amino-acid polypeptide reads, in one-letter code: Protein shisa-9 (424 aa).

The N-terminal stretch at 1-23 (MRRVLRLLLGCFLTELCARVCRA) is a signal peptide. At 24-149 (QERAGHGQLA…DPLHDPTKDK (126 aa)) the chain is on the extracellular side. 3 N-linked (GlcNAc...) asparagine glycosylation sites follow: Asn45, Asn89, and Asn116. A helical transmembrane segment spans residues 150–170 (TNLIVYIICGVVAVMVLVGIF). Over 171 to 424 (TKLGLEKAHR…ITNSKTEVTV (254 aa)) the chain is Cytoplasmic. Residues 333–424 (PRAFSPEHGP…ITNSKTEVTV (92 aa)) form a disordered region. The segment covering 414–424 (FITNSKTEVTV) has biased composition (polar residues).

The protein belongs to the shisa family. SHISA9 subfamily. As to quaternary structure, component of some AMPA receptors (ionotropic glutamate receptors) complex, at least composed of some AMPA receptor (GRIA1, GRIA2 and/or GRIA3), CACNG2 and SHISA9, as well as low level of DLG4.

The protein localises to the cell projection. Its subcellular location is the dendritic spine membrane. It is found in the synapse. Regulator of short-term neuronal synaptic plasticity in the dentate gyrus. Associates with AMPA receptors (ionotropic glutamate receptors) in synaptic spines and promotes AMPA receptor desensitization at excitatory synapses. The polypeptide is Protein shisa-9 (SHISA9) (Homo sapiens (Human)).